The chain runs to 435 residues: D-amino acid dehydrogenase (435 aa).

An FAD-binding site is contributed by 3-17 (VLILGSGVIGTTSAW).

Belongs to the DadA oxidoreductase family. FAD is required as a cofactor.

It carries out the reaction a D-alpha-amino acid + A + H2O = a 2-oxocarboxylate + AH2 + NH4(+). It functions in the pathway amino-acid degradation; D-alanine degradation; NH(3) and pyruvate from D-alanine: step 1/1. Functionally, oxidative deamination of D-amino acids. This chain is D-amino acid dehydrogenase, found in Xylella fastidiosa (strain M12).